The chain runs to 293 residues: Probable endonuclease 4 (293 aa).

The Zn(2+) site is built by H77, H118, E153, D187, H190, H221, D234, H236, and E266.

Belongs to the AP endonuclease 2 family. Zn(2+) serves as cofactor.

The enzyme catalyses Endonucleolytic cleavage to 5'-phosphooligonucleotide end-products.. Functionally, endonuclease IV plays a role in DNA repair. It cleaves phosphodiester bonds at apurinic or apyrimidinic (AP) sites, generating a 3'-hydroxyl group and a 5'-terminal sugar phosphate. The chain is Probable endonuclease 4 from Mesoplasma florum (strain ATCC 33453 / NBRC 100688 / NCTC 11704 / L1) (Acholeplasma florum).